A 64-amino-acid polypeptide reads, in one-letter code: DNA gyrase inhibitor YacG (64 aa).

Positions 7, 10, 26, and 30 each coordinate Zn(2+). The interval 44 to 64 is disordered; it reads RIPGEIDPELLPYPEEGEQWQ.

This sequence belongs to the DNA gyrase inhibitor YacG family. In terms of assembly, interacts with GyrB. Zn(2+) is required as a cofactor.

In terms of biological role, inhibits all the catalytic activities of DNA gyrase by preventing its interaction with DNA. Acts by binding directly to the C-terminal domain of GyrB, which probably disrupts DNA binding by the gyrase. The sequence is that of DNA gyrase inhibitor YacG from Aeromonas hydrophila subsp. hydrophila (strain ATCC 7966 / DSM 30187 / BCRC 13018 / CCUG 14551 / JCM 1027 / KCTC 2358 / NCIMB 9240 / NCTC 8049).